The sequence spans 279 residues: Probable flavonol synthase 4 (279 aa).

A disordered region spans residues 1–25 (MEVERDQHKPPLSLQNNKIPSSQNF). Residues 13–25 (SLQNNKIPSSQNF) show a composition bias toward polar residues. Residues 156–256 (GAGYLMKINY…RMSSVVHIKP (101 aa)) enclose the Fe2OG dioxygenase domain. 164–166 (NYY) contacts 2-oxoglutarate. His181, Asp183, and His237 together coordinate Fe cation. 247–249 (RMS) contacts 2-oxoglutarate.

Belongs to the iron/ascorbate-dependent oxidoreductase family. Requires Fe(2+) as cofactor.

The enzyme catalyses a (2R,3R)-dihydroflavonol + 2-oxoglutarate + O2 = a flavonol + succinate + CO2 + H2O. The protein operates within secondary metabolite biosynthesis; flavonoid biosynthesis. In Arabidopsis thaliana (Mouse-ear cress), this protein is Probable flavonol synthase 4 (FLS4).